The sequence spans 70 residues: Large ribosomal subunit protein uL29 (70 aa).

The protein belongs to the universal ribosomal protein uL29 family.

This Clostridium novyi (strain NT) protein is Large ribosomal subunit protein uL29.